A 3491-amino-acid chain; its full sequence is Erythronolide synthase EryA1 (3491 aa).

The loading domain stretch occupies residues 1–484 (MSGPRSRTTS…TPRALAEALA (484 aa)). The interval 57–372 (VFVFPGQGAQ…AAQAFTGGVA (316 aa)) is acyltransferase 1. Ser145 functions as the Acyl-ester intermediate; for acyltransferase 1 activity in the catalytic mechanism. The disordered stretch occupies residues 386 to 410 (PALCRSSRRPRRKTSRPSPASTGTR). Residues 391 to 400 (SSRRPRRKTS) are compositionally biased toward basic residues. The 76-residue stretch at 412 to 487 (RTCCERLLAV…ALAEALAAGT (76 aa)) folds into the Carrier 1 domain. At Ser447 the chain carries O-(pantetheine 4'-phosphoryl)serine. The Ketosynthase family 3 (KS3) 1 domain maps to 504–928 (GEPVAVVAMA…GTNAHAIIEE (425 aa)). Module regions lie at residues 507–1958 (VAVV…AHLA) and 1982–3404 (IAIV…GFLD). The active-site Acyl-thioester intermediate; for beta-ketoacyl synthase 1 activity is Cys677. Residues His812 and His850 each act as for beta-ketoacyl synthase 1 activity in the active site. Residues 1031–1352 (VFVFPGQGWQ…ALSRAFAAGV (322 aa)) are acyltransferase 2. The Acyl-ester intermediate; for acyltransferase 2 activity role is filled by Ser1128. A beta-ketoacyl reductase 1 region spans residues 1613–1790 (GTVLVTGGTG…ATAVAWGTWA (178 aa)). NADP(+) contacts are provided by residues 1621-1624 (TGGV), 1644-1647 (SRSG), 1673-1674 (DV), Lys1723, and 1745-1746 (FS). Catalysis depends on Tyr1760, which acts as the For beta-ketoacyl reductase 1 activity. One can recognise a Carrier 2 domain in the interval 1886–1961 (EALFELVRSH…TLAAHLAAEL (76 aa)). Residue Ser1921 is modified to O-(pantetheine 4'-phosphoryl)serine. Positions 1979-2402 (DEPIAIVGMA…GTNAHVIIAE (424 aa)) constitute a Ketosynthase family 3 (KS3) 2 domain. Residue Cys2148 is the Acyl-thioester intermediate; for beta-ketoacyl synthase 2 activity of the active site. Residues His2283 and His2323 each act as for beta-ketoacyl synthase 2 activity in the active site. Residues 2508-2827 (VFVFPGQGAQ…LADAHTRGVA (320 aa)) form an acyltransferase 3 region. Ser2598 (acyl-ester intermediate; for acyltransferase 3 activity) is an active-site residue. Residues 3057 to 3233 (GTILVTGGTA…ATSVAWGLWA (177 aa)) are beta-ketoacyl reductase 2. NADP(+)-binding positions include 3065-3068 (TAGL), 3088-3091 (SRRG), 3117-3118 (DV), Lys3168, and 3188-3189 (FS). Tyr3203 acts as the For beta-ketoacyl reductase 2 activity in catalysis. The region spanning 3329–3407 (ERTAELVRLV…AVAGFLDAEL (79 aa)) is the Carrier 3 domain. Ser3367 is modified (O-(pantetheine 4'-phosphoryl)serine). The disordered stretch occupies residues 3456–3491 (QAADASGTGANPSGDDLGEAGVDELLEALGRELDGD). The span at 3471 to 3481 (DLGEAGVDELL) shows a compositional bias: acidic residues.

Homodimer. Erythronolide synthase is composed of EryAI, EryAII and EryAIII multimodular (2 modules) polypeptides each coding for a functional synthase subunit which participates in 2 of the six FAS-like elongation steps required for formation of the polyketide. Module 1, 2, 3, 4, 5, and 6 participating in biosynthesis steps 1, 2, 3, 4, 5, and 6, respectively. The cofactor is pantetheine 4'-phosphate.

The catalysed reaction is 6 (S)-methylmalonyl-CoA + propanoyl-CoA + 6 NADPH + 12 H(+) = 6-deoxyerythronolide B + 6 CO2 + 6 NADP(+) + 7 CoA + H2O. The protein operates within antibiotic biosynthesis; erythromycin biosynthesis. Its function is as follows. Involved in the biosynthesis of antibiotic erythromycin via the biosynthesis of its aglycone precursor, 6-deoxyerythronolide B (6-dEB). The sequence is that of Erythronolide synthase EryA1 (eryA) from Saccharopolyspora erythraea (Streptomyces erythraeus).